A 174-amino-acid chain; its full sequence is Shikimate kinase (174 aa).

ATP is bound at residue 15-20; it reads GTGKST. Mg(2+) is bound at residue S19. 3 residues coordinate substrate: D37, R61, and G82. R120 is an ATP binding site. Substrate is bound at residue R138.

The protein belongs to the shikimate kinase family. In terms of assembly, monomer. Mg(2+) is required as a cofactor.

It localises to the cytoplasm. The catalysed reaction is shikimate + ATP = 3-phosphoshikimate + ADP + H(+). The protein operates within metabolic intermediate biosynthesis; chorismate biosynthesis; chorismate from D-erythrose 4-phosphate and phosphoenolpyruvate: step 5/7. Functionally, catalyzes the specific phosphorylation of the 3-hydroxyl group of shikimic acid using ATP as a cosubstrate. The polypeptide is Shikimate kinase (Staphylococcus aureus (strain MSSA476)).